A 387-amino-acid polypeptide reads, in one-letter code: MPNMAETKDPVRLRLLSLELLKQLWAGHEAMCRSVVRAASGSNLDCSSNNLEMPLSQETSSASSVAPSSQDKRHMLDPLDSRRDDTFDVAWYVKFNSRMDSFLPATGQHQEPQEELRPPSVPLLATQGLKGPVSLGGPKGLGPDKTQVPRSILSRLSKPSKPRVTSQESAVPESSWHSRPYLGYDWIAGSLDNSSPVTSEPEAFFSMLQRFRENNKEDCVCNSPEAVFPGLQESSGVEEDHECMYCYRINRRLFPEPVDPGAPCRLCGIPRDEKGPGTLVEPVQVRVSIPLSIMDPPHQYRIHRRKSFDASDTLALPRHCLLGWDILPPKSEKTSVPKSLDLWSSVSYGAGQRRDLSATSPPCQALPAQVTPPLWSEPQVAQLCPSH.

Residues 50 to 59 are compositionally biased toward polar residues; sequence NLEMPLSQET. 2 disordered regions span residues 50–80 and 133–172; these read NLEM…DPLD and VSLG…SAVP. A compositionally biased stretch (low complexity) spans 60-69; it reads SSASSVAPSS. A compositionally biased stretch (basic and acidic residues) spans 70–80; that stretch reads QDKRHMLDPLD. Serine 307 carries the phosphoserine modification.

As to quaternary structure, interacts with IGFBP2.

Its function is as follows. Inhibits glioma cells invasion and down-regulates adhesion- and motility-associated genes such as NFKB2 and ICAM1. Exhibits opposing effects to IGFBP2 on cell invasion. This Mus musculus (Mouse) protein is Migration and invasion-inhibitory protein (Miip).